The sequence spans 207 residues: Protein GrpE (207 aa).

It belongs to the GrpE family. As to quaternary structure, homodimer.

It localises to the cytoplasm. Participates actively in the response to hyperosmotic and heat shock by preventing the aggregation of stress-denatured proteins, in association with DnaK and GrpE. It is the nucleotide exchange factor for DnaK and may function as a thermosensor. Unfolded proteins bind initially to DnaJ; upon interaction with the DnaJ-bound protein, DnaK hydrolyzes its bound ATP, resulting in the formation of a stable complex. GrpE releases ADP from DnaK; ATP binding to DnaK triggers the release of the substrate protein, thus completing the reaction cycle. Several rounds of ATP-dependent interactions between DnaJ, DnaK and GrpE are required for fully efficient folding. The polypeptide is Protein GrpE (Pelodictyon phaeoclathratiforme (strain DSM 5477 / BU-1)).